Here is a 306-residue protein sequence, read N- to C-terminus: Recombination-associated protein RdgC (306 aa).

Belongs to the RdgC family.

It localises to the cytoplasm. It is found in the nucleoid. May be involved in recombination. In Pseudomonas syringae pv. syringae (strain B728a), this protein is Recombination-associated protein RdgC.